Consider the following 374-residue polypeptide: uncharacterized protein (374 aa).

Positions 158, 160, 190, 221, 312, and 314 each coordinate a divalent metal cation.

It belongs to the metallophosphoesterase superfamily. Requires a divalent metal cation as cofactor.

This is an uncharacterized protein from Campylobacter jejuni subsp. jejuni serotype O:2 (strain ATCC 700819 / NCTC 11168).